The chain runs to 536 residues: Chaperonin GroEL (536 aa).

ATP-binding positions include 29–32, 86–90, Gly-412, and Asp-493; these read TLGP and DGTTT.

This sequence belongs to the chaperonin (HSP60) family. As to quaternary structure, forms a cylinder of 14 subunits composed of two heptameric rings stacked back-to-back. Interacts with the co-chaperonin GroES.

The protein resides in the cytoplasm. It carries out the reaction ATP + H2O + a folded polypeptide = ADP + phosphate + an unfolded polypeptide.. Its function is as follows. Together with its co-chaperonin GroES, plays an essential role in assisting protein folding. The GroEL-GroES system forms a nano-cage that allows encapsulation of the non-native substrate proteins and provides a physical environment optimized to promote and accelerate protein folding. The sequence is that of Chaperonin GroEL from Aster yellows witches'-broom phytoplasma (strain AYWB).